A 449-amino-acid polypeptide reads, in one-letter code: NADP-specific glutamate dehydrogenase (449 aa).

Residues K92, Q113, and K116 each contribute to the substrate site. K128 acts as the Proton donor in catalysis. G167 is a substrate binding site. NADP(+) is bound by residues T211 and N242. S380 lines the substrate pocket.

Belongs to the Glu/Leu/Phe/Val dehydrogenases family. Homohexamer.

The enzyme catalyses L-glutamate + NADP(+) + H2O = 2-oxoglutarate + NH4(+) + NADPH + H(+). In terms of biological role, catalyzes the reversible oxidative deamination of glutamate to alpha-ketoglutarate and ammonia. The protein is NADP-specific glutamate dehydrogenase (gdhA) of Haemophilus influenzae (strain ATCC 51907 / DSM 11121 / KW20 / Rd).